The chain runs to 445 residues: Phosphoglucosamine mutase (445 aa).

The active-site Phosphoserine intermediate is S102. Mg(2+) contacts are provided by S102, D240, D242, and D244. Residue S102 is modified to Phosphoserine.

It belongs to the phosphohexose mutase family. It depends on Mg(2+) as a cofactor. Activated by phosphorylation.

It catalyses the reaction alpha-D-glucosamine 1-phosphate = D-glucosamine 6-phosphate. Functionally, catalyzes the conversion of glucosamine-6-phosphate to glucosamine-1-phosphate. The sequence is that of Phosphoglucosamine mutase from Mycolicibacterium vanbaalenii (strain DSM 7251 / JCM 13017 / BCRC 16820 / KCTC 9966 / NRRL B-24157 / PYR-1) (Mycobacterium vanbaalenii).